The chain runs to 432 residues: Adenylosuccinate synthetase (432 aa).

Residues 13-19 (GDEGKGK) and 41-43 (GHT) each bind GTP. Asp14 functions as the Proton acceptor in the catalytic mechanism. Asp14 and Gly41 together coordinate Mg(2+). IMP contacts are provided by residues 14–17 (DEGK), 39–42 (NAGH), Thr130, Arg144, Gln225, Thr240, and Arg304. His42 serves as the catalytic Proton donor. 300–306 (ATTGRRR) lines the substrate pocket. GTP-binding positions include Arg306, 332–334 (KLD), and 415–417 (STG).

This sequence belongs to the adenylosuccinate synthetase family. As to quaternary structure, homodimer. The cofactor is Mg(2+).

It localises to the cytoplasm. It carries out the reaction IMP + L-aspartate + GTP = N(6)-(1,2-dicarboxyethyl)-AMP + GDP + phosphate + 2 H(+). Its pathway is purine metabolism; AMP biosynthesis via de novo pathway; AMP from IMP: step 1/2. Plays an important role in the de novo pathway of purine nucleotide biosynthesis. Catalyzes the first committed step in the biosynthesis of AMP from IMP. The protein is Adenylosuccinate synthetase of Pectobacterium atrosepticum (strain SCRI 1043 / ATCC BAA-672) (Erwinia carotovora subsp. atroseptica).